A 1343-amino-acid chain; its full sequence is Xanthine dehydrogenase (1343 aa).

The 2Fe-2S ferredoxin-type domain maps to Ser8–Ile95. [2Fe-2S] cluster contacts are provided by Cys47, Cys52, Cys55, Cys77, Cys117, Cys120, Cys152, and Cys154. The 190-residue stretch at Phe235–Pro424 folds into the FAD-binding PCMH-type domain. FAD contacts are provided by residues Leu263–Val270, Phe343, Cys353–Asn357, Asp366, Leu414, and Lys432. Residues Gln780 and Phe811 each contribute to the Mo-molybdopterin site. The substrate site is built by Glu815 and Arg893. Arg925 is a Mo-molybdopterin binding site. Substrate is bound at residue Phe927. Residue Ala1092 participates in Mo-molybdopterin binding. Glu1275 serves as the catalytic Proton acceptor.

Belongs to the xanthine dehydrogenase family. Homodimer. FAD serves as cofactor. Requires Mo-molybdopterin as cofactor. [2Fe-2S] cluster is required as a cofactor.

It localises to the peroxisome. It catalyses the reaction xanthine + NAD(+) + H2O = urate + NADH + H(+). The catalysed reaction is hypoxanthine + NAD(+) + H2O = xanthine + NADH + H(+). Functionally, key enzyme in purine degradation. Catalyzes the oxidation of hypoxanthine to xanthine. Catalyzes the oxidation of xanthine to uric acid. In Drosophila pseudoobscura pseudoobscura (Fruit fly), this protein is Xanthine dehydrogenase (ry).